A 237-amino-acid chain; its full sequence is Peptidase E (237 aa).

Residues Ser122, Asp137, and His159 each act as charge relay system in the active site.

Belongs to the peptidase S51 family.

It is found in the cytoplasm. It carries out the reaction Dipeptidase E catalyzes the hydrolysis of dipeptides Asp-|-Xaa. It does not act on peptides with N-terminal Glu, Asn or Gln, nor does it cleave isoaspartyl peptides.. Hydrolyzes dipeptides containing N-terminal aspartate residues. May play a role in allowing the cell to use peptide aspartate to spare carbon otherwise required for the synthesis of the aspartate family of amino acids. The protein is Peptidase E of Shewanella baltica (strain OS185).